The primary structure comprises 288 residues: MSHLKQLRTRIKSVKSTQKITKAMQLVSASKMAKIKSQIAKSNFYIEAISKMMSDIVSIDMYELSIEEQKFFNTIPNKATLLIVMTSQRGLCGTFNYSIIKQVKYDIKELENKGEQIKLIIIGKKGYEALKMQYASYIDSYFELPKIHAENLILQVKQKIMSLVANLEVSNCVIYFNKFKNAMTQIMTRQQVLPVEKYHDDSKIENDHYEYEGKNLISNLINLYVSSQINYALLQSRASEEGARMTAMENATNNANDLISKLVLKLNRSRQAIITTELIEIIAGSEAV.

This sequence belongs to the ATPase gamma chain family. F-type ATPases have 2 components, CF(1) - the catalytic core - and CF(0) - the membrane proton channel. CF(1) has five subunits: alpha(3), beta(3), gamma(1), delta(1), epsilon(1). CF(0) has three main subunits: a, b and c.

The protein localises to the cell inner membrane. In terms of biological role, produces ATP from ADP in the presence of a proton gradient across the membrane. The gamma chain is believed to be important in regulating ATPase activity and the flow of protons through the CF(0) complex. The protein is ATP synthase gamma chain of Rickettsia akari (strain Hartford).